A 1021-amino-acid polypeptide reads, in one-letter code: Outer capsid protein P3 (1021 aa).

Belongs to the phytoreovirus inner capsid protein P3 family. In terms of assembly, homodimer. Homomultimer.

The protein localises to the virion. The protein resides in the host cytoplasm. Functionally, capsid protein which self-assembles to form the inner icosahedral capsid with a T=2 symmetry, and consisting of 60 P3 dimers. This chain is Outer capsid protein P3, found in Nephotettix cincticeps (Green rice leafhopper).